The primary structure comprises 90 residues: Probable Fe(2+)-trafficking protein (90 aa).

The protein belongs to the Fe(2+)-trafficking protein family.

In terms of biological role, could be a mediator in iron transactions between iron acquisition and iron-requiring processes, such as synthesis and/or repair of Fe-S clusters in biosynthetic enzymes. The sequence is that of Probable Fe(2+)-trafficking protein from Marinobacter nauticus (strain ATCC 700491 / DSM 11845 / VT8) (Marinobacter aquaeolei).